We begin with the raw amino-acid sequence, 406 residues long: Tryptophan 2,3-dioxygenase (406 aa).

Substrate-binding positions include 72–76 and arginine 144; that span reads FIVTH. Residue histidine 328 participates in heme binding. Substrate is bound at residue threonine 342.

This sequence belongs to the tryptophan 2,3-dioxygenase family. In terms of assembly, homotetramer. Dimer of dimers. Heme is required as a cofactor.

It catalyses the reaction L-tryptophan + O2 = N-formyl-L-kynurenine. It participates in amino-acid degradation; L-tryptophan degradation via kynurenine pathway; L-kynurenine from L-tryptophan: step 1/2. In terms of biological role, heme-dependent dioxygenase that catalyzes the oxidative cleavage of the L-tryptophan (L-Trp) pyrrole ring and converts L-tryptophan to N-formyl-L-kynurenine. Catalyzes the oxidative cleavage of the indole moiety. In Xenopus laevis (African clawed frog), this protein is Tryptophan 2,3-dioxygenase.